The sequence spans 416 residues: Tryptophan synthase beta chain (416 aa).

The disordered stretch occupies residues 1–23 (MTSTLPSQPKDMELANSSRPSVH). K109 carries the post-translational modification N6-(pyridoxal phosphate)lysine.

Belongs to the TrpB family. In terms of assembly, tetramer of two alpha and two beta chains. Requires pyridoxal 5'-phosphate as cofactor.

The catalysed reaction is (1S,2R)-1-C-(indol-3-yl)glycerol 3-phosphate + L-serine = D-glyceraldehyde 3-phosphate + L-tryptophan + H2O. The protein operates within amino-acid biosynthesis; L-tryptophan biosynthesis; L-tryptophan from chorismate: step 5/5. The beta subunit is responsible for the synthesis of L-tryptophan from indole and L-serine. The sequence is that of Tryptophan synthase beta chain from Prochlorococcus marinus (strain MIT 9211).